We begin with the raw amino-acid sequence, 655 residues long: Macrolide export ATP-binding/permease protein MacB (655 aa).

The region spanning 6–244 (IVLRGLRREY…VAAPTAAAAQ (239 aa)) is the ABC transporter domain. 42-49 (GASGSGKS) serves as a coordination point for ATP. Helical transmembrane passes span 279 to 299 (FLTMLGIIIGIASVVFIVAVG), 528 to 548 (LTLMIAAIAVISLVVGGIGVM), 579 to 599 (FLIEAVMVCLIGGGLGVAVAY), and 618 to 638 (AGSIIAAFICSTGIGVVFGYL).

This sequence belongs to the ABC transporter superfamily. Macrolide exporter (TC 3.A.1.122) family. Homodimer.

The protein localises to the cell inner membrane. Its function is as follows. Non-canonical ABC transporter that contains transmembrane domains (TMD), which form a pore in the inner membrane, and an ATP-binding domain (NBD), which is responsible for energy generation. Confers resistance against macrolides. This Rhodopseudomonas palustris (strain BisB18) protein is Macrolide export ATP-binding/permease protein MacB.